Consider the following 101-residue polypeptide: uncharacterized protein (101 aa).

Residues Phe13–Phe33 form a helical membrane-spanning segment.

It is found in the membrane. This is an uncharacterized protein from Schizosaccharomyces pombe (strain 972 / ATCC 24843) (Fission yeast).